A 321-amino-acid chain; its full sequence is Leucine-rich repeat-containing protein 46 (321 aa).

LRR repeat units lie at residues 45 to 66, 67 to 88, 89 to 110, and 111 to 132; these read ELQTVRLDREGITTIRNLEGLK, NLHSLYLQGNKIQQIENLACVP, SLRFLSLAGNQIRQVENLLDLP, and CLQFLDLSENLIETLKLDEFPQ. The LRRCT domain occupies 142 to 184; sequence NSCTNQDSYRELVIEALPLLLDLDGQPVMERWISDEEDEASSE. Serine 175 and serine 182 each carry phosphoserine. The stretch at 198 to 222 forms a coiled coil; it reads RGFLKELEQELSRHREHRQQAALTQ. A disordered region spans residues 235–321; that stretch reads NLPLLPGVPM…TKTMAKRSKK (87 aa).

It localises to the cell projection. The protein resides in the cilium. It is found in the flagellum. Its function is as follows. Required for normal spermatogenesis and male fertility. Plays an important role in sperm flagellum biogenesis. The polypeptide is Leucine-rich repeat-containing protein 46 (LRRC46) (Macaca fascicularis (Crab-eating macaque)).